Consider the following 865-residue polypeptide: MRVMEMRKNCQHLWKWGTMLLGMLMICSAAEDLWVTVYYGVPVWKEATTTLFCASEAKAYKTEVHNVWAKHACVPTDPNPQEVLLENVTENFNMWKNNMVEQMHEDIISLWDQSLKPCVKLTPLCVTLNCTDANLNGTNVTSSSGGTMMENGEIKNCSFQVTTSRRDKTQKKYALFYKLDVVPIEKGNISPKNNTSNNTSYGNYTLIHCNSSVITQACPKVSFEPIPIHYCTPAGFAILKCNDKKFNGTGPCKNVSTVQCTHGIRPVVSTQLLLNGSLAEEEVVIRSENFTDNVKTIIVQLNASVQINCTRPNNNTRKSITKGPGRVIYATGQIIGDIRKAHCNLSRAQWNNTLKQVVTKLREQFDNKTIVFTSSSGGDPEIVLHSFNCGGEFFYCNTTQLFNSTWNSTEGSNNTGGNDTITLPCRIKQIVNMWQEVGKAMYAPPISGQIKCISNITGLLLTRDGGEDTTNTTEIFRLGGGNMRDNWRSELYKYKVVRIEPLGVAPTRAKRRVVQREKRAVGTIGAMFLGFLGAAGSTMGAGSITLTVQARHLLSGIVQQQNNLLRAIEAQQHLLQLTVWGIKQLQARVLAVERYLRDQQLLGIWGCSGKLICTTTVPWNASWSNKSLNMIWNNMTWMQWEREIDNYTGIIYNLLEESQNQQEKNEQELLELDKWANLWNWFDITQWLWYIRIFIMIVGGLVGLKIVFAVLSIVNRVRQGYSPLSFQTHLPAPRGPDRPEGIEGEGGERDRDRSGGAVNGFLTLIWDDLWTLCSFSYHRLRDLLLIVVRIVELLGRRGWEALKYWWNLLQYWSQELKNSAVSLLNTTAIAVAEGTDRIIEVAQRILRAFLHIPRRIRQGLERALL.

An N-terminal signal peptide occupies residues 1 to 31 (MRVMEMRKNCQHLWKWGTMLLGMLMICSAAE). Over 32–693 (DLWVTVYYGV…ITQWLWYIRI (662 aa)) the chain is Extracellular. A disulfide bond links cysteine 53 and cysteine 73. Residues asparagine 87, asparagine 129, asparagine 136, asparagine 139, asparagine 156, asparagine 193, asparagine 194, asparagine 197, asparagine 198, asparagine 203, asparagine 210, asparagine 247, asparagine 254, asparagine 275, asparagine 289, asparagine 302, asparagine 308, asparagine 314, asparagine 344, asparagine 351, and asparagine 367 are each glycosylated (N-linked (GlcNAc...) asparagine; by host). Intrachain disulfides connect cysteine 118–cysteine 218, cysteine 125–cysteine 209, cysteine 130–cysteine 157, cysteine 231–cysteine 260, and cysteine 241–cysteine 252. Positions 130 to 156 (CTDANLNGTNVTSSSGGTMMENGEIKN) are V1. Positions 157-209 (CSFQVTTSRRDKTQKKYALFYKLDVVPIEKGNISPKNNTSNNTSYGNYTLIHC) are V2. The segment at 309–342 (CTRPNNNTRKSITKGPGRVIYATGQIIGDIRKAH) is V3. A disulfide bridge links cysteine 309 with cysteine 343. The interval 375–385 (SSGGDPEIVLH) is CD4-binding loop. Cystine bridges form between cysteine 389–cysteine 452 and cysteine 396–cysteine 425. A V4 region spans residues 396 to 425 (CNTTQLFNSTWNSTEGSNNTGGNDTITLPC). N-linked (GlcNAc...) asparagine; by host glycosylation is found at asparagine 397, asparagine 403, asparagine 407, asparagine 413, asparagine 418, asparagine 455, and asparagine 471. V5 regions lie at residues 468–479 (DTTNTTEIFRLG) and 470–479 (TNTTEIFRLG). Residues 520 to 541 (AVGTIGAMFLGFLGAAGSTMGA) form a fusion peptide region. The interval 583–601 (KQLQARVLAVERYLRDQQL) is immunosuppression. Cysteine 607 and cysteine 613 form a disulfide bridge. N-linked (GlcNAc...) asparagine; by host glycans are attached at residues asparagine 620, asparagine 625, asparagine 634, and asparagine 646. The stretch at 642-676 (REIDNYTGIIYNLLEESQNQQEKNEQELLELDKWA) forms a coiled coil. Positions 671-692 (ELDKWANLWNWFDITQWLWYIR) are MPER; binding to GalCer. Residues 694 to 714 (FIMIVGGLVGLKIVFAVLSIV) traverse the membrane as a helical segment. Residues 715–865 (NRVRQGYSPL…IRQGLERALL (151 aa)) lie on the Cytoplasmic side of the membrane. The short motif at 721–724 (YSPL) is the YXXL motif; contains endocytosis signal element. Residues 728 to 754 (THLPAPRGPDRPEGIEGEGGERDRDRS) form a disordered region. Positions 735-754 (GPDRPEGIEGEGGERDRDRS) are enriched in basic and acidic residues. Residue cysteine 773 is the site of S-palmitoyl cysteine; by host attachment. The short motif at 864-865 (LL) is the Di-leucine internalization motif element.

It belongs to the HIV-1 env protein family. In terms of assembly, the mature envelope protein (Env) consists of a homotrimer of non-covalently associated gp120-gp41 heterodimers. The resulting complex protrudes from the virus surface as a spike. There seems to be as few as 10 spikes on the average virion. Interacts with host CD4, CCR5 and CXCR4. Gp120 also interacts with the C-type lectins CD209/DC-SIGN and CLEC4M/DC-SIGNR (collectively referred to as DC-SIGN(R)). Gp120 and gp41 interact with GalCer. Gp120 interacts with host ITGA4/ITGB7 complex; on CD4+ T-cells, this interaction results in rapid activation of integrin ITGAL/LFA-1, which facilitates efficient cell-to-cell spreading of HIV-1. Gp120 interacts with cell-associated heparan sulfate; this interaction increases virus infectivity on permissive cells and may be involved in infection of CD4- cells. The mature envelope protein (Env) consists of a homotrimer of non-covalently associated gp120-gp41 heterodimers. The resulting complex protrudes from the virus surface as a spike. There seems to be as few as 10 spikes on the average virion. Highly glycosylated by host. The high number of glycan on the protein is reffered to as 'glycan shield' because it contributes to hide protein sequence from adaptive immune system. In terms of processing, palmitoylation of the transmembrane protein and of Env polyprotein (prior to its proteolytic cleavage) is essential for their association with host cell membrane lipid rafts. Palmitoylation is therefore required for envelope trafficking to classical lipid rafts, but not for viral replication. Post-translationally, specific enzymatic cleavages in vivo yield mature proteins. Envelope glycoproteins are synthesized as an inactive precursor that is heavily N-glycosylated and processed likely by host cell furin in the Golgi to yield the mature SU and TM proteins. The cleavage site between SU and TM requires the minimal sequence [KR]-X-[KR]-R. About 2 of the 9 disulfide bonds of gp41 are reduced by P4HB/PDI, following binding to CD4 receptor.

It is found in the virion membrane. The protein resides in the host cell membrane. Its subcellular location is the host endosome membrane. Its function is as follows. Oligomerizes in the host endoplasmic reticulum into predominantly trimers. In a second time, gp160 transits in the host Golgi, where glycosylation is completed. The precursor is then proteolytically cleaved in the trans-Golgi and thereby activated by cellular furin or furin-like proteases to produce gp120 and gp41. In terms of biological role, attaches the virus to the host lymphoid cell by binding to the primary receptor CD4. This interaction induces a structural rearrangement creating a high affinity binding site for a chemokine coreceptor like CXCR4 and/or CCR5. Acts as a ligand for CD209/DC-SIGN and CLEC4M/DC-SIGNR, which are respectively found on dendritic cells (DCs), and on endothelial cells of liver sinusoids and lymph node sinuses. These interactions allow capture of viral particles at mucosal surfaces by these cells and subsequent transmission to permissive cells. HIV subverts the migration properties of dendritic cells to gain access to CD4+ T-cells in lymph nodes. Virus transmission to permissive T-cells occurs either in trans (without DCs infection, through viral capture and transmission), or in cis (following DCs productive infection, through the usual CD4-gp120 interaction), thereby inducing a robust infection. In trans infection, bound virions remain infectious over days and it is proposed that they are not degraded, but protected in non-lysosomal acidic organelles within the DCs close to the cell membrane thus contributing to the viral infectious potential during DCs' migration from the periphery to the lymphoid tissues. On arrival at lymphoid tissues, intact virions recycle back to DCs' cell surface allowing virus transmission to CD4+ T-cells. Functionally, acts as a class I viral fusion protein. Under the current model, the protein has at least 3 conformational states: pre-fusion native state, pre-hairpin intermediate state, and post-fusion hairpin state. During fusion of viral and target intracellular membranes, the coiled coil regions (heptad repeats) assume a trimer-of-hairpins structure, positioning the fusion peptide in close proximity to the C-terminal region of the ectodomain. The formation of this structure appears to drive apposition and subsequent fusion of viral and target cell membranes. Complete fusion occurs in host cell endosomes and is dynamin-dependent, however some lipid transfer might occur at the plasma membrane. The virus undergoes clathrin-dependent internalization long before endosomal fusion, thus minimizing the surface exposure of conserved viral epitopes during fusion and reducing the efficacy of inhibitors targeting these epitopes. Membranes fusion leads to delivery of the nucleocapsid into the cytoplasm. The polypeptide is Envelope glycoprotein gp160 (Homo sapiens (Human)).